A 160-amino-acid polypeptide reads, in one-letter code: Aspartate 1-decarboxylase 2 (160 aa).

Catalysis depends on serine 25, which acts as the Schiff-base intermediate with substrate; via pyruvic acid. The residue at position 25 (serine 25) is a Pyruvic acid (Ser). Threonine 57 lines the substrate pocket. The Proton donor role is filled by tyrosine 58. Residue 73–75 participates in substrate binding; sequence GAA.

This sequence belongs to the PanD family. As to quaternary structure, heterooctamer of four alpha and four beta subunits. Requires pyruvate as cofactor. Is synthesized initially as an inactive proenzyme, which is activated by self-cleavage at a specific serine bond to produce a beta-subunit with a hydroxyl group at its C-terminus and an alpha-subunit with a pyruvoyl group at its N-terminus.

It localises to the cytoplasm. The catalysed reaction is L-aspartate + H(+) = beta-alanine + CO2. Its pathway is cofactor biosynthesis; (R)-pantothenate biosynthesis; beta-alanine from L-aspartate: step 1/1. Catalyzes the pyruvoyl-dependent decarboxylation of aspartate to produce beta-alanine. The polypeptide is Aspartate 1-decarboxylase 2 (Frankia casuarinae (strain DSM 45818 / CECT 9043 / HFP020203 / CcI3)).